The sequence spans 289 residues: CRISPR-associated endoribonuclease Cas6 2 (289 aa).

The protein belongs to the CRISPR-associated endoribonuclease Cas6 family. Possibly part of the aCascade ribonucleoprotein complex. The cofactor is Mg(2+).

CRISPR (clustered regularly interspaced short palindromic repeat) is an adaptive immune system that provides protection against mobile genetic elements (viruses, transposable elements and conjugative plasmids). CRISPR clusters contain sequences complementary to antecedent mobile elements and target invading nucleic acids. CRISPR clusters are transcribed and processed into CRISPR RNA (crRNA). Functions as a ssRNA-specific endoribonuclease, generating an 8 base-long tag known as the 5' handle. This is CRISPR-associated endoribonuclease Cas6 2 (cas6b) from Saccharolobus solfataricus (strain ATCC 35092 / DSM 1617 / JCM 11322 / P2) (Sulfolobus solfataricus).